Here is a 463-residue protein sequence, read N- to C-terminus: ATP synthase subunit beta (463 aa).

152–159 (GGAGVGKT) is an ATP binding site.

This sequence belongs to the ATPase alpha/beta chains family. F-type ATPases have 2 components, CF(1) - the catalytic core - and CF(0) - the membrane proton channel. CF(1) has five subunits: alpha(3), beta(3), gamma(1), delta(1), epsilon(1). CF(0) has three main subunits: a(1), b(2) and c(9-12). The alpha and beta chains form an alternating ring which encloses part of the gamma chain. CF(1) is attached to CF(0) by a central stalk formed by the gamma and epsilon chains, while a peripheral stalk is formed by the delta and b chains.

The protein resides in the cell inner membrane. It catalyses the reaction ATP + H2O + 4 H(+)(in) = ADP + phosphate + 5 H(+)(out). Produces ATP from ADP in the presence of a proton gradient across the membrane. The catalytic sites are hosted primarily by the beta subunits. This chain is ATP synthase subunit beta, found in Shewanella baltica (strain OS223).